The chain runs to 64 residues: Sperm protamine P1 (64 aa).

Residues 1–64 are disordered; that stretch reads MVRYRRHSRS…QSRRRRRRRY (64 aa).

This sequence belongs to the protamine P1 family. In terms of tissue distribution, testis.

It localises to the nucleus. The protein localises to the chromosome. Protamines substitute for histones in the chromatin of sperm during the haploid phase of spermatogenesis. They compact sperm DNA into a highly condensed, stable and inactive complex. In Dromiciops gliroides (Monito del Monte), this protein is Sperm protamine P1 (PRM1).